We begin with the raw amino-acid sequence, 295 residues long: uncharacterized protein (295 aa).

The HTH lysR-type domain occupies 1–58; that stretch reads MESGDLRVFQMVAREGTITKAALQLGYVQSNVTARIQQLEAELGTTLFLRHNRGMTLS. The H-T-H motif DNA-binding region spans 18–37; sequence ITKAALQLGYVQSNVTARIQ.

Belongs to the LysR transcriptional regulatory family.

This is an uncharacterized protein from Bacillus subtilis (strain 168).